Here is a 193-residue protein sequence, read N- to C-terminus: Orotate phosphoribosyltransferase (193 aa).

Residue 114-122 (EDVITTGGS) coordinates 5-phospho-alpha-D-ribose 1-diphosphate. Orotate contacts are provided by Thr-118 and Arg-146.

It belongs to the purine/pyrimidine phosphoribosyltransferase family. PyrE subfamily. Homodimer. Mg(2+) is required as a cofactor.

The catalysed reaction is orotidine 5'-phosphate + diphosphate = orotate + 5-phospho-alpha-D-ribose 1-diphosphate. It participates in pyrimidine metabolism; UMP biosynthesis via de novo pathway; UMP from orotate: step 1/2. Functionally, catalyzes the transfer of a ribosyl phosphate group from 5-phosphoribose 1-diphosphate to orotate, leading to the formation of orotidine monophosphate (OMP). The protein is Orotate phosphoribosyltransferase of Chlorobaculum parvum (strain DSM 263 / NCIMB 8327) (Chlorobium vibrioforme subsp. thiosulfatophilum).